We begin with the raw amino-acid sequence, 494 residues long: Chromosomal replication initiator protein DnaA (494 aa).

Positions methionine 1 to methionine 103 are domain I, interacts with DnaA modulators. The segment at methionine 103–serine 148 is domain II. Residues proline 149–glutamine 371 are domain III, AAA+ region. 4 residues coordinate ATP: glycine 195, glycine 197, lysine 198, and threonine 199. The segment at serine 372–alanine 494 is domain IV, binds dsDNA.

This sequence belongs to the DnaA family. In terms of assembly, oligomerizes as a right-handed, spiral filament on DNA at oriC.

It localises to the cytoplasm. In terms of biological role, plays an essential role in the initiation and regulation of chromosomal replication. ATP-DnaA binds to the origin of replication (oriC) to initiate formation of the DNA replication initiation complex once per cell cycle. Binds the DnaA box (a 9 base pair repeat at the origin) and separates the double-stranded (ds)DNA. Forms a right-handed helical filament on oriC DNA; dsDNA binds to the exterior of the filament while single-stranded (ss)DNA is stabiized in the filament's interior. The ATP-DnaA-oriC complex binds and stabilizes one strand of the AT-rich DNA unwinding element (DUE), permitting loading of DNA polymerase. After initiation quickly degrades to an ADP-DnaA complex that is not apt for DNA replication. Binds acidic phospholipids. This is Chromosomal replication initiator protein DnaA from Bartonella quintana (strain Toulouse) (Rochalimaea quintana).